A 664-amino-acid polypeptide reads, in one-letter code: Threonine--tRNA ligase (664 aa).

One can recognise a TGS domain in the interval 1–64 (MSELLKITLP…TADAQLALVT (64 aa)). Residues 250 to 559 (DHRKLGNEMD…LIEHFAGRLP (310 aa)) are catalytic. Cys355, His406, and His536 together coordinate Zn(2+).

It belongs to the class-II aminoacyl-tRNA synthetase family. In terms of assembly, homodimer. The cofactor is Zn(2+).

It localises to the cytoplasm. The catalysed reaction is tRNA(Thr) + L-threonine + ATP = L-threonyl-tRNA(Thr) + AMP + diphosphate + H(+). Functionally, catalyzes the attachment of threonine to tRNA(Thr) in a two-step reaction: L-threonine is first activated by ATP to form Thr-AMP and then transferred to the acceptor end of tRNA(Thr). Also edits incorrectly charged L-seryl-tRNA(Thr). The protein is Threonine--tRNA ligase of Novosphingobium aromaticivorans (strain ATCC 700278 / DSM 12444 / CCUG 56034 / CIP 105152 / NBRC 16084 / F199).